We begin with the raw amino-acid sequence, 326 residues long: Tryptophan--tRNA ligase (326 aa).

Residues Gln11 to Thr13 and Gly19 to Asn20 contribute to the ATP site. Positions Pro12–Asn20 match the 'HIGH' region motif. Residue Asp135 coordinates L-tryptophan. Residues Gly147 to Asp149, Val186, and Lys195 to Ser199 contribute to the ATP site. The 'KMSKS' region signature appears at Lys195–Ser199.

Belongs to the class-I aminoacyl-tRNA synthetase family. As to quaternary structure, homodimer.

It is found in the cytoplasm. The catalysed reaction is tRNA(Trp) + L-tryptophan + ATP = L-tryptophyl-tRNA(Trp) + AMP + diphosphate + H(+). In terms of biological role, catalyzes the attachment of tryptophan to tRNA(Trp). This is Tryptophan--tRNA ligase from Helicobacter pylori (strain ATCC 700392 / 26695) (Campylobacter pylori).